The primary structure comprises 174 residues: ATP synthase subunit delta, sodium ion specific (174 aa).

Belongs to the ATPase delta chain family. As to quaternary structure, F-type ATPases have 2 components, F(1) - the catalytic core - and F(0) - the membrane proton channel. F(1) has five subunits: alpha(3), beta(3), gamma(1), delta(1), epsilon(1). F(0) has three main subunits: a(1), b(2) and c(10-14). The alpha and beta chains form an alternating ring which encloses part of the gamma chain. F(1) is attached to F(0) by a central stalk formed by the gamma and epsilon chains, while a peripheral stalk is formed by the delta and b chains.

The protein resides in the cell inner membrane. Its function is as follows. F(1)F(0) ATP synthase produces ATP from ADP in the presence of a proton or sodium gradient. F-type ATPases consist of two structural domains, F(1) containing the extramembraneous catalytic core and F(0) containing the membrane proton channel, linked together by a central stalk and a peripheral stalk. During catalysis, ATP synthesis in the catalytic domain of F(1) is coupled via a rotary mechanism of the central stalk subunits to proton translocation. This protein is part of the stalk that links CF(0) to CF(1). It either transmits conformational changes from CF(0) to CF(1) or is implicated in proton conduction. This is ATP synthase subunit delta, sodium ion specific from Ilyobacter tartaricus.